A 271-amino-acid polypeptide reads, in one-letter code: Tryptophan synthase alpha chain (271 aa).

Catalysis depends on proton acceptor residues glutamate 47 and aspartate 58.

The protein belongs to the TrpA family. Tetramer of two alpha and two beta chains.

It catalyses the reaction (1S,2R)-1-C-(indol-3-yl)glycerol 3-phosphate + L-serine = D-glyceraldehyde 3-phosphate + L-tryptophan + H2O. It participates in amino-acid biosynthesis; L-tryptophan biosynthesis; L-tryptophan from chorismate: step 5/5. Functionally, the alpha subunit is responsible for the aldol cleavage of indoleglycerol phosphate to indole and glyceraldehyde 3-phosphate. The polypeptide is Tryptophan synthase alpha chain (Thermus thermophilus (strain ATCC BAA-163 / DSM 7039 / HB27)).